The sequence spans 241 residues: Co-chaperone protein p23-1 (241 aa).

The CS domain maps to Ser-2 to Leu-91. MGG repeat units lie at residues Met-129 to Gly-131, Met-132 to Gly-134, Met-135 to Gly-137, Met-138 to Gly-140, Met-141 to Gly-143, Met-144 to Gly-146, Met-147 to Gly-149, Met-150 to Gly-152, Met-162 to Gly-164, Met-165 to Gly-167, Met-168 to Gly-170, Met-171 to Gly-173, Met-180 to Gly-182, Met-183 to Gly-185, Met-186 to Gly-188, Met-189 to Gly-191, and Met-192 to Gly-194. Residues Met-129–Gly-194 form a 17 X 3 AA repeats of M-G-G region. Positions Gly-188–Lys-241 are disordered. Residues Glu-196–Glu-206 are compositionally biased toward acidic residues. Residues Thr-207 to Ala-224 are compositionally biased toward basic and acidic residues. Low complexity predominate over residues Thr-225 to Thr-234.

It belongs to the p23/wos2 family. As to quaternary structure, interacts with HSP90 in an ATP-dependent manner. Interacts with HSP90-5, HSP90-6 and HSP90-7. Widely expressed but preferentially in the root meristem.

It is found in the cytoplasm. The protein localises to the nucleus. Functionally, acts as a co-chaperone for HSP90. Controls root development through the modulation of auxin distribution in the root meristem. The polypeptide is Co-chaperone protein p23-1 (Arabidopsis thaliana (Mouse-ear cress)).